We begin with the raw amino-acid sequence, 177 residues long: Peptide methionine sulfoxide reductase MsrA (177 aa).

Residue C15 is part of the active site.

This sequence belongs to the MsrA Met sulfoxide reductase family.

It carries out the reaction L-methionyl-[protein] + [thioredoxin]-disulfide + H2O = L-methionyl-(S)-S-oxide-[protein] + [thioredoxin]-dithiol. It catalyses the reaction [thioredoxin]-disulfide + L-methionine + H2O = L-methionine (S)-S-oxide + [thioredoxin]-dithiol. Functionally, has an important function as a repair enzyme for proteins that have been inactivated by oxidation. Catalyzes the reversible oxidation-reduction of methionine sulfoxide in proteins to methionine. The chain is Peptide methionine sulfoxide reductase MsrA from Listeria monocytogenes serotype 4a (strain HCC23).